Here is an 86-residue protein sequence, read N- to C-terminus: Cell division topological specificity factor (86 aa).

It belongs to the MinE family.

Prevents the cell division inhibition by proteins MinC and MinD at internal division sites while permitting inhibition at polar sites. This ensures cell division at the proper site by restricting the formation of a division septum at the midpoint of the long axis of the cell. This chain is Cell division topological specificity factor, found in Shewanella frigidimarina (strain NCIMB 400).